The primary structure comprises 393 residues: Cholinephosphotransferase 1 (393 aa).

Topologically, residues 1–40 (MGFFIPQSSLGNLKLYKYQSDDRSFLSNHVLRPFWRKFAT) are lumenal. A helical transmembrane segment spans residues 41–61 (IFPLWMAPNLVTLLGFCFIIF). At 62-172 (NVLTTLYYDP…YHTHKLYLAE (111 aa)) the chain is on the cytoplasmic side. A helical transmembrane segment spans residues 173–193 (FCGPVEGIIVLCISFIAVGIY). The Lumenal segment spans residues 194 to 210 (GPQTIWHTKVAQFSWQD). The helical transmembrane segment at 211–231 (FVFDVETVHLMYAFCTGALIF) threads the bilayer. Topologically, residues 232–263 (NIVTAHTNVVRYYESQSTKSATPSKTAENISK) are cytoplasmic. The chain crosses the membrane as a helical span at residues 264 to 284 (AVNGLLPFFAYFSSIFTLVLI). A topological domain (lumenal) is located at residue glutamine 285. Residues 286 to 306 (PSFISLALILSIGFSVAFVVG) form a helical membrane-spanning segment. Residues 307–320 (RMIIAHLTMQPFPM) lie on the Cytoplasmic side of the membrane. Residues 321 to 341 (VNFPFLIPTIQLVLYAFMVYV) traverse the membrane as a helical segment. The Lumenal segment spans residues 342 to 348 (LDYQKGS). The helical transmembrane segment at 349 to 369 (IVSALVWMGLGLTLAIHGMFI) threads the bilayer. Residues 370–393 (NDIIYDITTFLDIYALSIKHPKEI) are Cytoplasmic-facing.

Belongs to the CDP-alcohol phosphatidyltransferase class-I family. Mg(2+) serves as cofactor.

The protein resides in the microsome membrane. The protein localises to the endoplasmic reticulum membrane. Its subcellular location is the mitochondrion outer membrane. It carries out the reaction CDP-choline + a 1,2-diacyl-sn-glycerol = a 1,2-diacyl-sn-glycero-3-phosphocholine + CMP + H(+). The catalysed reaction is CDP-N,N-dimethylethanolamine + a 1,2-diacyl-sn-glycerol = a 1,2-diacyl-sn-glycero-3-phospho-N,N-dimethylethanolamine + CMP + H(+). Its pathway is phospholipid metabolism; phosphatidylcholine biosynthesis; phosphatidylcholine from phosphocholine: step 2/2. With respect to regulation, requires a divalent cation activator, and is inhibited by CMP. Activated by phospholipids, especially phosphatidylcholine. Catalyzes the final step in the CDP-choline route leading to phosphatidylcholin (PC). Preferentially uses CDP-monomethylethanolamine as aminoalcohol substrate. Shows highest activity toward di- and mono-unsaturated diacylglycerol species as lipid substrates. The CDP-choline pathway only contributes to net PC synthesis if exogenous choline is present. In its absence, this pathway recycles choline from PC turnover and may contribute to maintaining the proper PC species composition. This chain is Cholinephosphotransferase 1 (CPT1), found in Saccharomyces cerevisiae (strain ATCC 204508 / S288c) (Baker's yeast).